Consider the following 350-residue polypeptide: Protein-glutamate methylesterase/protein-glutamine glutaminase (350 aa).

A Response regulatory domain is found at 5-122 (KVLCVDDSAL…RDGLIEYSEV (118 aa)). A 4-aspartylphosphate modification is found at aspartate 56. Residues 152 to 346 (PFASSEKLVI…ERILTRLGDR (195 aa)) form the CheB-type methylesterase domain. Residues serine 165, histidine 191, and aspartate 288 contribute to the active site.

It belongs to the CheB family. Post-translationally, phosphorylated by CheA. Phosphorylation of the N-terminal regulatory domain activates the methylesterase activity.

It localises to the cytoplasm. The enzyme catalyses [protein]-L-glutamate 5-O-methyl ester + H2O = L-glutamyl-[protein] + methanol + H(+). It carries out the reaction L-glutaminyl-[protein] + H2O = L-glutamyl-[protein] + NH4(+). Functionally, involved in chemotaxis. Part of a chemotaxis signal transduction system that modulates chemotaxis in response to various stimuli. Catalyzes the demethylation of specific methylglutamate residues introduced into the chemoreceptors (methyl-accepting chemotaxis proteins or MCP) by CheR. Also mediates the irreversible deamidation of specific glutamine residues to glutamic acid. The polypeptide is Protein-glutamate methylesterase/protein-glutamine glutaminase (Bordetella parapertussis (strain 12822 / ATCC BAA-587 / NCTC 13253)).